Consider the following 281-residue polypeptide: Sulfur carrier protein FdhD (281 aa).

The Cysteine persulfide intermediate role is filled by Cys117.

This sequence belongs to the FdhD family.

The protein localises to the cytoplasm. Required for formate dehydrogenase (FDH) activity. Acts as a sulfur carrier protein that transfers sulfur from IscS to the molybdenum cofactor prior to its insertion into FDH. The polypeptide is Sulfur carrier protein FdhD (Xanthomonas oryzae pv. oryzae (strain MAFF 311018)).